A 109-amino-acid polypeptide reads, in one-letter code: Flagellar transcriptional regulator FlhD (109 aa).

It belongs to the FlhD family. In terms of assembly, homodimer; disulfide-linked. Forms a heterohexamer composed of two FlhC and four FlhD subunits. Each FlhC binds a FlhD dimer, forming a heterotrimer, and a hexamer assembles by dimerization of two heterotrimers.

It is found in the cytoplasm. Functionally, functions in complex with FlhC as a master transcriptional regulator that regulates transcription of several flagellar and non-flagellar operons by binding to their promoter region. Activates expression of class 2 flagellar genes, including fliA, which is a flagellum-specific sigma factor that turns on the class 3 genes. Also regulates genes whose products function in a variety of physiological pathways. The protein is Flagellar transcriptional regulator FlhD of Acidovorax sp. (strain JS42).